A 468-amino-acid polypeptide reads, in one-letter code: Nuclear pore complex protein Nup50 (468 aa).

Over residues 1–16 (MAKRNAEKELTDRNWD) the composition is skewed to basic and acidic residues. A disordered region spans residues 1–26 (MAKRNAEKELTDRNWDQEDEAEEVGT). N-acetylalanine is present on alanine 2. Lysine 8 carries the post-translational modification N6-acetyllysine. Serine 52 is subject to Phosphoserine. Repeat unit 1 spans residues 76–77 (FG). Residues 76–304 (FGSGAGGKPL…FSPGNSSLFG (229 aa)) are 5 X 2 AA repeats of F-G. Lysine 83 bears the N6-acetyllysine mark. Residues 113-114 (FG) form repeat 2. 2 disordered regions span residues 122-148 (TTLVDKVSNPKTNGDSQQPSSSGLASS) and 201-224 (HGNSGRNSESESNKVAAETQSPSL). An N6-acetyllysine modification is found at lysine 127. Low complexity predominate over residues 137-148 (SQQPSSSGLASS). Residues 144-206 (GLASSKACVG…IEQQHGNSGR (63 aa)) form a binding to CDKN1B region. Phosphoserine is present on residues serine 208 and serine 221. The stretch at 225 to 226 (FG) is repeat 3. At serine 234 the chain carries Phosphoserine. The interval 238 to 269 (FHGNKTEDTPDKKMEVASEKKTDPSSLGATSA) is disordered. Residues 241-260 (NKTEDTPDKKMEVASEKKTD) are compositionally biased toward basic and acidic residues. Residues threonine 246 and threonine 259 each carry the phosphothreonine modification. Serine 270 is modified (phosphoserine). The stretch at 273–274 (FG) is repeat 4. Serine 296 is subject to Phosphoserine. The stretch at 303-304 (FG) is repeat 5. Polar residues predominate over residues 304-317 (GKDTTQSKPVSSPF). The interval 304-345 (GKDTTQSKPVSSPFPTKPLEGQAEGDSGECKGGDEEENDEPP) is disordered. Residues 335-468 (GGDEEENDEP…HKILLEKKDA (134 aa)) enclose the RanBD1 domain. A Glycyl lysine isopeptide (Lys-Gly) (interchain with G-Cter in SUMO2) cross-link involves residue lysine 353. Lysine 450 is subject to N6-acetyllysine.

As to quaternary structure, interacts with Importin alpha-2, Importin beta, Importin beta-2, NUP153, Ran binding protein 7, CDKN1B and itself. Does not interact with TPR. As to expression, ubiquitous. Highest levels in testis, peripheral blood leukocytes and fetal liver.

It is found in the nucleus. The protein localises to the nuclear pore complex. The protein resides in the nucleus membrane. In terms of biological role, component of the nuclear pore complex that has a direct role in nuclear protein import. Actively displaces NLSs from importin-alpha, and facilitates disassembly of the importin-alpha:beta-cargo complex and importin recycling. Interacts with regulatory proteins of cell cycle progression including CDKN1B. This interaction is required for correct intracellular transport and degradation of CDKN1B. This is Nuclear pore complex protein Nup50 (NUP50) from Homo sapiens (Human).